A 418-amino-acid chain; its full sequence is Glutamyl-tRNA reductase (418 aa).

Substrate is bound by residues 49–52 (TCNR), serine 109, 114–116 (EPQ), and glutamine 120. Cysteine 50 acts as the Nucleophile in catalysis. NADP(+) is bound at residue 189–194 (GAGETI).

Belongs to the glutamyl-tRNA reductase family. In terms of assembly, homodimer.

The catalysed reaction is (S)-4-amino-5-oxopentanoate + tRNA(Glu) + NADP(+) = L-glutamyl-tRNA(Glu) + NADPH + H(+). The protein operates within porphyrin-containing compound metabolism; protoporphyrin-IX biosynthesis; 5-aminolevulinate from L-glutamyl-tRNA(Glu): step 1/2. Its function is as follows. Catalyzes the NADPH-dependent reduction of glutamyl-tRNA(Glu) to glutamate 1-semialdehyde (GSA). The polypeptide is Glutamyl-tRNA reductase (Escherichia fergusonii (strain ATCC 35469 / DSM 13698 / CCUG 18766 / IAM 14443 / JCM 21226 / LMG 7866 / NBRC 102419 / NCTC 12128 / CDC 0568-73)).